We begin with the raw amino-acid sequence, 415 residues long: MALNIPFRNAYYRFASSYSFLFFISWSLWWSLYAIWLKGHLGLTGTELGTLYSVNQFTSILFMMFYGIVQDKLGLKKPLIWCMSFILVLTGPFMIYVYEPLLQSNFSVGLILGALFFGLGYLAGCGLLDSFTEKMARNFHFEYGTARAWGSFGYAIGAFFAGIFFSISPHINFWLVSLFGAVFMMINMRFKDKDHQCIAADAGGVKKEDFIAVFKDRNFWVFVIFIVGTWSFYNIFDQQLFPVFYAGLFESHDVGTRLYGYLNSFQVVLEALCMAIIPFFVNRVGPKNALLIGVVIMALRILSCALFVNPWIISLVKLLHAIEVPLCVISVFKYSVANFDKRLSSTIFLIGFQIASSLGIVLLSTPTGILFDHAGYQTVFFAISGIVCLMLLFGIFFLSKKREQIVMETPVPSAI.

The Cytoplasmic portion of the chain corresponds to 1–16 (MALNIPFRNAYYRFAS). Residues 17–37 (SYSFLFFISWSLWWSLYAIWL) form a helical membrane-spanning segment. Residues 38 to 48 (KGHLGLTGTEL) lie on the Periplasmic side of the membrane. A helical transmembrane segment spans residues 49–69 (GTLYSVNQFTSILFMMFYGIV). The Cytoplasmic portion of the chain corresponds to 70–77 (QDKLGLKK). A helical membrane pass occupies residues 78–98 (PLIWCMSFILVLTGPFMIYVY). The Periplasmic portion of the chain corresponds to 99 to 107 (EPLLQSNFS). Residues 108–128 (VGLILGALFFGLGYLAGCGLL) traverse the membrane as a helical segment. Residues 129-147 (DSFTEKMARNFHFEYGTAR) are Cytoplasmic-facing. A helical transmembrane segment spans residues 148–167 (AWGSFGYAIGAFFAGIFFSI). At 168-170 (SPH) the chain is on the periplasmic side. The chain crosses the membrane as a helical span at residues 171–190 (INFWLVSLFGAVFMMINMRF). At 191–220 (KDKDHQCIAADAGGVKKEDFIAVFKDRNFW) the chain is on the cytoplasmic side. A helical membrane pass occupies residues 221–241 (VFVIFIVGTWSFYNIFDQQLF). The Periplasmic segment spans residues 242 to 260 (PVFYAGLFESHDVGTRLYG). A helical transmembrane segment spans residues 261–281 (YLNSFQVVLEALCMAIIPFFV). The Cytoplasmic portion of the chain corresponds to 282–287 (NRVGPK). The chain crosses the membrane as a helical span at residues 288-308 (NALLIGVVIMALRILSCALFV). At 309-311 (NPW) the chain is on the periplasmic side. A helical transmembrane segment spans residues 312 to 332 (IISLVKLLHAIEVPLCVISVF). At 333-342 (KYSVANFDKR) the chain is on the cytoplasmic side. The chain crosses the membrane as a helical span at residues 343 to 363 (LSSTIFLIGFQIASSLGIVLL). Residues 364-377 (STPTGILFDHAGYQ) are Periplasmic-facing. Residues 378 to 398 (TVFFAISGIVCLMLLFGIFFL) traverse the membrane as a helical segment. The Cytoplasmic segment spans residues 399-415 (SKKREQIVMETPVPSAI).

Belongs to the major facilitator superfamily. Oligosaccharide:H(+) symporter (OHS) (TC 2.A.1.5) family.

Its subcellular location is the cell inner membrane. The protein operates within glycan biosynthesis; sucrose metabolism. Its function is as follows. Responsible for transport of sucrose into the cell, with the concomitant import of a proton (symport system). Can also transport maltose, fructose or lactulose, but not glucose, lactose or melibiose. The substrate specificity is directed toward the fructofuranosyl moiety of the substrate. The sequence is that of Sucrose permease from Escherichia coli.